The sequence spans 128 residues: Cytochrome c-type biogenesis protein CcmE (128 aa).

Residues Met1 to Arg8 lie on the Cytoplasmic side of the membrane. The helical; Signal-anchor for type II membrane protein transmembrane segment at Leu9–Asn29 threads the bilayer. The Periplasmic portion of the chain corresponds to Leu30–Gln128. Positions 120 and 124 each coordinate heme.

The protein belongs to the CcmE/CycJ family.

The protein localises to the cell inner membrane. Functionally, heme chaperone required for the biogenesis of c-type cytochromes. Transiently binds heme delivered by CcmC and transfers the heme to apo-cytochromes in a process facilitated by CcmF and CcmH. The polypeptide is Cytochrome c-type biogenesis protein CcmE (Rickettsia peacockii (strain Rustic)).